The chain runs to 412 residues: MQMLTLAQQAKIASIELAQFGNVQKNHALLTIAEQLEQRSAEILAANAKDIEFAKNQGISTAIIDRLLLNESRLQGIANDVRNVAKLADPVGQVIDGGVLNSGLKIERQRVPLGVILTIYEARPNVTIDVASLCLKTGNAVILRGGKETKFTNAVLVEVVQQALETAGLPKLAVQAVTDPDRALLLELLKLDRYIDMVIPRGGAGLHQFCKENSTIPVIVGGIGVCHMFVEKSADQEKALELIANAKTQRPSTCNTLETLLVEKAIAGEFLPKLANRMKALDVTLHTDDLQKTEGIEPLDDARMRQEWLSLDLNVVVIDNLTKAVEHIREYGSQHSEAILTSDYQLARQFVAQVDAAAVYINASTRFTDGGEFGLGAEVAVSTQKLHARGPMGLEALTTYKWVCEGDYLVRK.

Belongs to the gamma-glutamyl phosphate reductase family.

The protein resides in the cytoplasm. The catalysed reaction is L-glutamate 5-semialdehyde + phosphate + NADP(+) = L-glutamyl 5-phosphate + NADPH + H(+). The protein operates within amino-acid biosynthesis; L-proline biosynthesis; L-glutamate 5-semialdehyde from L-glutamate: step 2/2. Catalyzes the NADPH-dependent reduction of L-glutamate 5-phosphate into L-glutamate 5-semialdehyde and phosphate. The product spontaneously undergoes cyclization to form 1-pyrroline-5-carboxylate. This is Gamma-glutamyl phosphate reductase from Actinobacillus pleuropneumoniae serotype 5b (strain L20).